The following is a 126-amino-acid chain: Large ribosomal subunit protein bL12 (126 aa).

The protein belongs to the bacterial ribosomal protein bL12 family. Homodimer. Part of the ribosomal stalk of the 50S ribosomal subunit. Forms a multimeric L10(L12)X complex, where L10 forms an elongated spine to which 2 to 4 L12 dimers bind in a sequential fashion. Binds GTP-bound translation factors.

Forms part of the ribosomal stalk which helps the ribosome interact with GTP-bound translation factors. Is thus essential for accurate translation. The sequence is that of Large ribosomal subunit protein bL12 from Chlorobium phaeobacteroides (strain BS1).